A 611-amino-acid polypeptide reads, in one-letter code: Oxidoreductase cicC (611 aa).

The signal sequence occupies residues Met1–Ala20. FAD contacts are provided by residues Asn45–Ala46 and Glu65–Ala66. 2 N-linked (GlcNAc...) asparagine glycosylation sites follow: Asn76 and Asn113. FAD contacts are provided by residues Val123 and Asn131–Thr134. Residues Asn282, Asn410, and Asn475 are each glycosylated (N-linked (GlcNAc...) asparagine). The Proton acceptor role is filled by His547. His547 (proton donor) is an active-site residue. An FAD-binding site is contributed by Ala581. His591 (proton acceptor) is an active-site residue. Residue Pro592–Ile593 participates in FAD binding.

This sequence belongs to the GMC oxidoreductase family. Requires FAD as cofactor.

It functions in the pathway phytotoxin biosynthesis. Its function is as follows. Oxidoreductase; part of the gene cluster that mediates the biosynthesis of cichorine, a phytotoxin active against knapweed, corn, and soybeans. The first step in the pathway is performed by the non-reducing polyketide synthase pkbA that condenses one acetyl-CoA starter unit with 3 malonyl-CoA units. PkbA also catalyzes one methylation step to produce 3-methylorsellinate. The nonribosomal peptide synthase-like protein cicB, the cytochrome P450 monooxygenase cicH and the O-methyltransferase cicE are involved in the conversion of 3-methylorsellinate into nidulol. CicB converts 3-methylorsellinate to a yet unidentified intermediate, cicH may play a ring-closing role for cichorine and cicE is plausibly responsible for the methylation of one of the phenol groups. The oxidoreductase cicC acts downstream with still unidentified enzymes to further convert nidulol into cichorine. In Emericella nidulans (strain FGSC A4 / ATCC 38163 / CBS 112.46 / NRRL 194 / M139) (Aspergillus nidulans), this protein is Oxidoreductase cicC.